Consider the following 221-residue polypeptide: Adenylate kinase (221 aa).

10–15 (GAGKGT) lines the ATP pocket. The segment at 30–59 (STGDMLRAAVKAGTPLGVEAKKVMDAGGLV) is NMP. AMP is bound by residues T31, R36, 57 to 59 (GLV), 85 to 88 (GFPR), and Q92. An LID region spans residues 122–159 (GRRVHVASGRTYHVKYNPPKTEGVDDETGEALIQRDDD). ATP is bound by residues R123 and 132-133 (TY). AMP-binding residues include R156 and R167. G207 contacts ATP.

Belongs to the adenylate kinase family. In terms of assembly, monomer.

It is found in the cytoplasm. The enzyme catalyses AMP + ATP = 2 ADP. It functions in the pathway purine metabolism; AMP biosynthesis via salvage pathway; AMP from ADP: step 1/1. Catalyzes the reversible transfer of the terminal phosphate group between ATP and AMP. Plays an important role in cellular energy homeostasis and in adenine nucleotide metabolism. The polypeptide is Adenylate kinase (Cupriavidus necator (strain ATCC 17699 / DSM 428 / KCTC 22496 / NCIMB 10442 / H16 / Stanier 337) (Ralstonia eutropha)).